A 366-amino-acid chain; its full sequence is Histidinol-phosphate aminotransferase (366 aa).

N6-(pyridoxal phosphate)lysine is present on Lys228.

It belongs to the class-II pyridoxal-phosphate-dependent aminotransferase family. Histidinol-phosphate aminotransferase subfamily. As to quaternary structure, homodimer. Pyridoxal 5'-phosphate is required as a cofactor.

It carries out the reaction L-histidinol phosphate + 2-oxoglutarate = 3-(imidazol-4-yl)-2-oxopropyl phosphate + L-glutamate. The protein operates within amino-acid biosynthesis; L-histidine biosynthesis; L-histidine from 5-phospho-alpha-D-ribose 1-diphosphate: step 7/9. This Corynebacterium diphtheriae (strain ATCC 700971 / NCTC 13129 / Biotype gravis) protein is Histidinol-phosphate aminotransferase.